Consider the following 446-residue polypeptide: Tol-Pal system protein TolB (446 aa).

The signal sequence occupies residues M1–A43.

This sequence belongs to the TolB family. In terms of assembly, the Tol-Pal system is composed of five core proteins: the inner membrane proteins TolA, TolQ and TolR, the periplasmic protein TolB and the outer membrane protein Pal. They form a network linking the inner and outer membranes and the peptidoglycan layer.

The protein resides in the periplasm. Functionally, part of the Tol-Pal system, which plays a role in outer membrane invagination during cell division and is important for maintaining outer membrane integrity. The polypeptide is Tol-Pal system protein TolB (Cupriavidus metallidurans (strain ATCC 43123 / DSM 2839 / NBRC 102507 / CH34) (Ralstonia metallidurans)).